The following is a 207-amino-acid chain: Glutathione S-transferase 3 (207 aa).

Residues 2 to 79 form the GST N-terminal domain; that stretch reads VHYKLTYFNA…YLARKFGFVG (78 aa). Glutathione is bound by residues Tyr8, Lys43, 49–51, and 63–64; these read GQV and QS. The GST C-terminal domain maps to 81–207; the sequence is TAEEELQADE…WLAKRPETRF (127 aa).

Belongs to the GST superfamily. Sigma family.

The catalysed reaction is RX + glutathione = an S-substituted glutathione + a halide anion + H(+). Its function is as follows. Conjugation of reduced glutathione to a wide number of exogenous and endogenous hydrophobic electrophiles. The protein is Glutathione S-transferase 3 (gst-3) of Caenorhabditis elegans.